Consider the following 185-residue polypeptide: Non-structural protein 7a (185 aa).

A signal peptide spans 1–16 (MRFFLLLCFFLPCFQA).

The protein is Non-structural protein 7a of Rousettus leschenaultii (Leschenault's rousette).